The sequence spans 346 residues: Endo-1,4-beta-xylanase B (346 aa).

Residues 1–19 form the signal peptide; sequence MKGLPALLLLLIGCVSSFG. One can recognise a GH10 domain in the interval 41–338; that stretch reads GNNFWSLPDA…KPCYFAIREL (298 aa). The active-site Proton donor is the E153. E259 (nucleophile) is an active-site residue.

It belongs to the glycosyl hydrolase 10 (cellulase F) family.

It catalyses the reaction Endohydrolysis of (1-&gt;4)-beta-D-xylosidic linkages in xylans.. The sequence is that of Endo-1,4-beta-xylanase B (xynB) from Thermotoga neapolitana.